The primary structure comprises 750 residues: DDT domain-containing protein DDR4 (750 aa).

Residues 1–125 form a disordered region; the sequence is MGSSSDIVPD…ITSLVPPPEP (125 aa). Low complexity predominate over residues 45–54; sequence RAQQRLQELQ. Basic and acidic residues predominate over residues 55 to 77; it reads AAERKLKPPKKEYKREQHRRREE. Over residues 78 to 100 the composition is skewed to acidic residues; sequence VVEEDEDSEDDDQEDEENDGDDE. Positions 133–192 constitute a DDT domain; sequence LRSMWELASVLNFLHVFRPLLKINAEFSAEEFETALLTPNDTLSDIHIPLLKAIPPVTRM. 2 disordered regions span residues 450 to 505 and 532 to 750; these read NGRS…TDFV and LKKR…TDNS. Residues 451-471 show a composition bias toward polar residues; that stretch reads GRSTSSTHPTEPVNDTASGRS. Over residues 545-585 the composition is skewed to acidic residues; that stretch reads EGDEEKGDEEYKWDEDNAEYEEEEEEEEEEDSLSASEEDSD. Basic and acidic residues predominate over residues 595–606; the sequence is RRETKLRSRSND. Residues 688–707 are compositionally biased toward polar residues; the sequence is NADTTNGKENNQLNKSNGTT. A compositionally biased stretch (basic and acidic residues) spans 741-750; it reads LKDDDKTDNS.

In terms of assembly, interacts (via the DDT domain) with CHR11 (via C-terminus).

The protein localises to the nucleus. Probable transcription regulator. This Arabidopsis thaliana (Mouse-ear cress) protein is DDT domain-containing protein DDR4.